Here is a 555-residue protein sequence, read N- to C-terminus: MKIDLNTIFPSSRKEYIPGKIYKNIKIGMRKVSFNNDTESIFIYDTGGPHSDQDIQTNINNGIKKLRLNWITDRQDVEYYDRHTINTNSSTAFPLQNNKALKSKSDKPVTQMFYAKNNIITPEMEYVAIRENSLIQKLLSHTPNTIIPEITPELVRQEVAAGRAIIPANINHPESEPMIIGKNFLVKINANIGNSAVSSDINNEVHKMIYAIIYGADTVMDLSTGSHIHNTREWIIRNSPVPIGTVPIYQALNKVNGIVGELDFNIFKETLIEQAEQGVDYFTIHAGVLKKYIQYTTNRLTGIVSRGGAIIAQWCSIHNKENFLYTNFEEICDIMKSYDIAFSLGDGLRPGSIADANDKAQFLELKTLGELTDIAWKHDCQVMIEGPGHVPMHLIKENVEKQIYFCKEAPFYTLGPLTTDIAPGYDHITSAIGAAMIGWYGTSMLCYVTPKEHLGLPNLNDVKNGVITYKIAAHAADLAKGNPSAYIRDYALSHARFNFRWYDQFNLSLDPETAKSFHDESLPSEHAKSAHFCSMCGPKFCSMKLTHQLQLNSTE.

Residues Asn191, Met220, Tyr249, His285, 305–307, 346–349, and Glu385 each bind substrate; these read SRG and DGLR. Position 389 (His389) interacts with Zn(2+). Residue Tyr412 coordinates substrate. Zn(2+) is bound at residue His453. Residues Cys533, Cys536, and Cys541 each contribute to the [4Fe-4S] cluster site.

This sequence belongs to the ThiC family. In terms of assembly, homodimer. [4Fe-4S] cluster is required as a cofactor.

The catalysed reaction is 5-amino-1-(5-phospho-beta-D-ribosyl)imidazole + S-adenosyl-L-methionine = 4-amino-2-methyl-5-(phosphooxymethyl)pyrimidine + CO + 5'-deoxyadenosine + formate + L-methionine + 3 H(+). The protein operates within cofactor biosynthesis; thiamine diphosphate biosynthesis. In terms of biological role, catalyzes the synthesis of the hydroxymethylpyrimidine phosphate (HMP-P) moiety of thiamine from aminoimidazole ribotide (AIR) in a radical S-adenosyl-L-methionine (SAM)-dependent reaction. The protein is Phosphomethylpyrimidine synthase of Ehrlichia ruminantium (strain Welgevonden).